The chain runs to 567 residues: Proline--tRNA ligase (567 aa).

This sequence belongs to the class-II aminoacyl-tRNA synthetase family. ProS type 1 subfamily. Homodimer.

Its subcellular location is the cytoplasm. The enzyme catalyses tRNA(Pro) + L-proline + ATP = L-prolyl-tRNA(Pro) + AMP + diphosphate. In terms of biological role, catalyzes the attachment of proline to tRNA(Pro) in a two-step reaction: proline is first activated by ATP to form Pro-AMP and then transferred to the acceptor end of tRNA(Pro). As ProRS can inadvertently accommodate and process non-cognate amino acids such as alanine and cysteine, to avoid such errors it has two additional distinct editing activities against alanine. One activity is designated as 'pretransfer' editing and involves the tRNA(Pro)-independent hydrolysis of activated Ala-AMP. The other activity is designated 'posttransfer' editing and involves deacylation of mischarged Ala-tRNA(Pro). The misacylated Cys-tRNA(Pro) is not edited by ProRS. This chain is Proline--tRNA ligase, found in Idiomarina loihiensis (strain ATCC BAA-735 / DSM 15497 / L2-TR).